The following is a 472-amino-acid chain: Methanethiol oxidase (472 aa).

The residue at position 2 (A2) is an N-acetylalanine. Phosphoserine is present on residues S111 and S467.

Belongs to the selenium-binding protein family. As to quaternary structure, interacts with USP33. The N-terminus is blocked. In terms of tissue distribution, highly expressed in liver, kidney and, to a lesser extent, lung.

The protein resides in the nucleus. The protein localises to the cytoplasm. Its subcellular location is the cytosol. It localises to the membrane. The catalysed reaction is methanethiol + O2 + H2O = hydrogen sulfide + formaldehyde + H2O2 + H(+). It functions in the pathway organosulfur degradation. Catalyzes the oxidation of methanethiol, an organosulfur compound known to be produced in substantial amounts by gut bacteria. Selenium-binding protein which may be involved in the sensing of reactive xenobiotics in the cytoplasm. May be involved in intra-Golgi protein transport. This chain is Methanethiol oxidase (Selenbp1), found in Mus musculus (Mouse).